Consider the following 899-residue polypeptide: Nuclear factor NF-kappa-B p100 subunit (899 aa).

2 positions are modified to phosphoserine: serine 23 and serine 161. Positions 35 to 224 (ADGPYLVIVE…QPIHDSKSPG (190 aa)) constitute an RHD domain. The Nuclear localization signal signature appears at 337–341 (RKRRK). A GRR region spans residues 346-377 (FSQPFGGGSHMGGGSGGSAGGYGGAGGGGSLG). The interval 403–434 (GGAQMAGSRRDTDAGEGAEEPRTPPEAPQGEP) is disordered. The span at 410-425 (SRRDTDAGEGAEEPRT) shows a compositional bias: basic and acidic residues. The residue at position 425 (threonine 425) is a Phosphothreonine. 6 ANK repeats span residues 487–516 (NGDT…HAQY), 526–555 (LHQT…DPTL), 559–590 (HGDS…HAVP), 599–628 (EGLY…EVEA), 633–663 (GGRT…NVNA), and 667–696 (AGNT…DIHA). The disordered stretch occupies residues 698–734 (NEEPLCPLPSPSTSGSDSDSEGPERDTQRNFRGHTPL). Serine 713, serine 715, and serine 717 each carry phosphoserine. Residues 729-755 (RGHTPLDLTCSTKVKTLLLNAAQNTTE) form an ANK 7 repeat. Residues 764–851 (AGPGLSLGDA…EGVRLLKGPE (88 aa)) form the Death domain. Residue serine 812 is modified to Phosphoserine. Residues 851–865 (ETRDKLPSTEVKEDS) are compositionally biased toward basic and acidic residues. A disordered region spans residues 851 to 899 (ETRDKLPSTEVKEDSAYGSQSVEQEAEKLCPPPEPPGGLCHGHPQPQVH). Lysine 855 participates in a covalent cross-link: Glycyl lysine isopeptide (Lys-Gly) (interchain with G-Cter in ubiquitin). A phosphoserine; by MAP3K14 mark is found at serine 865 and serine 869. Residues 887-899 (GGLCHGHPQPQVH) show a composition bias toward low complexity.

Component of the NF-kappa-B RelB-p52 complex. Homodimer; component of the NF-kappa-B p52-p52 complex. Component of the NF-kappa-B p65-p52 complex. Component of the NF-kappa-B p52-c-Rel complex. NFKB2/p52 interacts with NFKBIE. Component of a complex consisting of the NF-kappa-B p50-p50 homodimer and BCL3. Directly interacts with MEN1. In terms of processing, while translation occurs, the particular unfolded structure after the GRR repeat promotes the generation of p52 making it an acceptable substrate for the proteasome. This process is known as cotranslational processing. The processed form is active and the unprocessed form acts as an inhibitor (I kappa B-like), being able to form cytosolic complexes with NF-kappa B, trapping it in the cytoplasm. Complete folding of the region downstream of the GRR repeat precludes processing. Post-translationally, subsequent to MAP3K14-dependent serine phosphorylation, p100 polyubiquitination occurs then triggering its proteasome-dependent processing. Constitutive processing is tightly suppressed by its C-terminal processing inhibitory domain, named PID, which contains the death domain. In terms of processing, ubiquitinated by TRIM55; leading to processing by VCP and subsequent ubiquitin-dependent protein degradation by the proteasome. In terms of tissue distribution, highly expressed in lymph nodes and thymus.

It localises to the nucleus. It is found in the cytoplasm. Functionally, NF-kappa-B is a pleiotropic transcription factor present in almost all cell types and is the endpoint of a series of signal transduction events that are initiated by a vast array of stimuli related to many biological processes such as inflammation, immunity, differentiation, cell growth, tumorigenesis and apoptosis. NF-kappa-B is a homo- or heterodimeric complex formed by the Rel-like domain-containing proteins RELA/p65, RELB, NFKB1/p105, NFKB1/p50, REL and NFKB2/p52. The dimers bind at kappa-B sites in the DNA of their target genes and the individual dimers have distinct preferences for different kappa-B sites that they can bind with distinguishable affinity and specificity. Different dimer combinations act as transcriptional activators or repressors, respectively. NF-kappa-B is controlled by various mechanisms of post-translational modification and subcellular compartmentalization as well as by interactions with other cofactors or corepressors. NF-kappa-B complexes are held in the cytoplasm in an inactive state complexed with members of the NF-kappa-B inhibitor (I-kappa-B) family. In a conventional activation pathway, I-kappa-B is phosphorylated by I-kappa-B kinases (IKKs) in response to different activators, subsequently degraded thus liberating the active NF-kappa-B complex which translocates to the nucleus. In a non-canonical activation pathway, the MAP3K14-activated CHUK/IKKA homodimer phosphorylates NFKB2/p100 associated with RelB, inducing its proteolytic processing to NFKB2/p52 and the formation of NF-kappa-B RelB-p52 complexes. The NF-kappa-B heterodimeric RelB-p52 complex is a transcriptional activator. The NF-kappa-B p52-p52 homodimer is a transcriptional repressor. NFKB2 appears to have dual functions such as cytoplasmic retention of attached NF-kappa-B proteins by p100 and generation of p52 by a cotranslational processing. The proteasome-mediated process ensures the production of both p52 and p100 and preserves their independent function. p52 binds to the kappa-B consensus sequence 5'-GGRNNYYCC-3', located in the enhancer region of genes involved in immune response and acute phase reactions. p52 and p100 are respectively the minor and major form; the processing of p100 being relatively poor. Isoform p49 is a subunit of the NF-kappa-B protein complex, which stimulates the HIV enhancer in synergy with p65. In concert with RELB, regulates the circadian clock by repressing the transcriptional activator activity of the CLOCK-BMAL1 heterodimer. The chain is Nuclear factor NF-kappa-B p100 subunit (Nfkb2) from Mus musculus (Mouse).